Reading from the N-terminus, the 181-residue chain is ATP synthase subunit delta (181 aa).

It belongs to the ATPase delta chain family. As to quaternary structure, F-type ATPases have 2 components, F(1) - the catalytic core - and F(0) - the membrane proton channel. F(1) has five subunits: alpha(3), beta(3), gamma(1), delta(1), epsilon(1). F(0) has three main subunits: a(1), b(2) and c(10-14). The alpha and beta chains form an alternating ring which encloses part of the gamma chain. F(1) is attached to F(0) by a central stalk formed by the gamma and epsilon chains, while a peripheral stalk is formed by the delta and b chains.

Its subcellular location is the cell inner membrane. Functionally, f(1)F(0) ATP synthase produces ATP from ADP in the presence of a proton or sodium gradient. F-type ATPases consist of two structural domains, F(1) containing the extramembraneous catalytic core and F(0) containing the membrane proton channel, linked together by a central stalk and a peripheral stalk. During catalysis, ATP synthesis in the catalytic domain of F(1) is coupled via a rotary mechanism of the central stalk subunits to proton translocation. Its function is as follows. This protein is part of the stalk that links CF(0) to CF(1). It either transmits conformational changes from CF(0) to CF(1) or is implicated in proton conduction. The polypeptide is ATP synthase subunit delta (Chlorobaculum parvum (strain DSM 263 / NCIMB 8327) (Chlorobium vibrioforme subsp. thiosulfatophilum)).